The sequence spans 675 residues: DNA gyrase subunit B (675 aa).

The 115-residue stretch at 453–567 folds into the Toprim domain; the sequence is SELYVVEGDS…NGHVFLAQPP (115 aa). Mg(2+) contacts are provided by Glu459, Asp532, and Asp534.

Belongs to the type II topoisomerase GyrB family. As to quaternary structure, heterotetramer, composed of two GyrA and two GyrB chains. In the heterotetramer, GyrA contains the active site tyrosine that forms a transient covalent intermediate with DNA, while GyrB binds cofactors and catalyzes ATP hydrolysis. The cofactor is Mg(2+). Mn(2+) serves as cofactor. It depends on Ca(2+) as a cofactor.

Its subcellular location is the cytoplasm. It catalyses the reaction ATP-dependent breakage, passage and rejoining of double-stranded DNA.. In terms of biological role, a type II topoisomerase that negatively supercoils closed circular double-stranded (ds) DNA in an ATP-dependent manner to modulate DNA topology and maintain chromosomes in an underwound state. Negative supercoiling favors strand separation, and DNA replication, transcription, recombination and repair, all of which involve strand separation. Also able to catalyze the interconversion of other topological isomers of dsDNA rings, including catenanes and knotted rings. Type II topoisomerases break and join 2 DNA strands simultaneously in an ATP-dependent manner. This chain is DNA gyrase subunit B, found in Mycobacterium tuberculosis (strain ATCC 25177 / H37Ra).